Here is a 228-residue protein sequence, read N- to C-terminus: Urease accessory protein UreF 1 (228 aa).

The protein belongs to the UreF family. In terms of assembly, ureD, UreF and UreG form a complex that acts as a GTP-hydrolysis-dependent molecular chaperone, activating the urease apoprotein by helping to assemble the nickel containing metallocenter of UreC. The UreE protein probably delivers the nickel.

It localises to the cytoplasm. Its function is as follows. Required for maturation of urease via the functional incorporation of the urease nickel metallocenter. The chain is Urease accessory protein UreF 1 from Brucella canis (strain ATCC 23365 / NCTC 10854 / RM-666).